Here is a 642-residue protein sequence, read N- to C-terminus: Threonine--tRNA ligase (642 aa).

The TGS domain maps to 1 to 61; the sequence is MPVITLPDGS…VDDASVAIIT (61 aa). The catalytic stretch occupies residues 243-534; sequence DHRKIGKQLD…LTEEYAGFFP (292 aa). Zn(2+) is bound by residues Cys334, His385, and His511.

The protein belongs to the class-II aminoacyl-tRNA synthetase family. Homodimer. The cofactor is Zn(2+).

It is found in the cytoplasm. The enzyme catalyses tRNA(Thr) + L-threonine + ATP = L-threonyl-tRNA(Thr) + AMP + diphosphate + H(+). Functionally, catalyzes the attachment of threonine to tRNA(Thr) in a two-step reaction: L-threonine is first activated by ATP to form Thr-AMP and then transferred to the acceptor end of tRNA(Thr). Also edits incorrectly charged L-seryl-tRNA(Thr). This chain is Threonine--tRNA ligase, found in Erwinia tasmaniensis (strain DSM 17950 / CFBP 7177 / CIP 109463 / NCPPB 4357 / Et1/99).